The following is a 497-amino-acid chain: FAD-linked oxidoreductase fogF (497 aa).

A signal peptide spans 1–18; that stretch reads MRRNILTALACSWLTAHA. Residues 59–229 form the FAD-binding PCMH-type domain; the sequence is NAPTYAGAIS…TSATYKLHKL (171 aa).

This sequence belongs to the oxygen-dependent FAD-linked oxidoreductase family. Requires FAD as cofactor.

The protein operates within secondary metabolite biosynthesis. Its function is as follows. FAD-linked oxidoreductase; part of the gene cluster that mediates the biosynthesis of flavoglaucin and congeners (including aspergin, dihydroauroglaucin and auroglaucin), prenylated salicylaldehyde derivatives carrying a saturated or an unsaturated C-7 side chain. The PKS fogA releases the carboxylic acid (8E,10E,12E)-3,5,7-trihydroxytetradeca-8,10,12-trienoic acid as its product, as well as derivatives with one and two double bonds. FogA is indeed able to reduce the initial triketide, thus being at least partially responsible for the differently saturated heptyl side chains of flavoglaucin congeners. The oxidoreductases fogB, fogC and fogD modify the nascent polyketide in fogA-bound form and, together, fogA, fogB, fogC and fogD are necessary for the formation of the aromatic core and the cyclized PKS products are released as salicyl alcohols. In particular, fogB is responsible for oxidation of a hydroxyl group or reduction of remaining double bond(s) at the C-7 residue whereas fogD is probably involved in the reductive release of the modified PKS products. The cytochrome P450 monooxygenase fogE is then responsible for the hydroxylation at C-3 of the benzene ring. The fogE products are substrates of the prenyltransferase fogH and the prenylated benzyl alcohols are subsequently oxidized by the fogF to produce the final aryl aldehydes flavoglaucin and congeners. The short-chain dehydrogenase fogG does not seem to be involved in the biosynthesis of the prenylated salicylaldehyde derivatives. This is FAD-linked oxidoreductase fogF from Aspergillus ruber (strain CBS 135680).